The primary structure comprises 382 residues: GDSL esterase/lipase At4g01130 (382 aa).

The signal sequence occupies residues 1–28 (MASDINRRRSFSLLVLIIVMLYGHKGDS). Ser-41 serves as the catalytic Nucleophile. 4 N-linked (GlcNAc...) asparagine glycosylation sites follow: Asn-118, Asn-263, Asn-275, and Asn-330. Catalysis depends on residues Asp-348 and His-351.

It belongs to the 'GDSL' lipolytic enzyme family.

It is found in the secreted. This chain is GDSL esterase/lipase At4g01130, found in Arabidopsis thaliana (Mouse-ear cress).